The following is a 464-amino-acid chain: Arginine biosynthesis bifunctional protein ArgJ, mitochondrial (464 aa).

Substrate contacts are provided by threonine 191, lysine 220, threonine 231, glutamate 318, asparagine 459, and threonine 464. Threonine 231 acts as the Nucleophile in catalysis.

The protein belongs to the ArgJ family. As to quaternary structure, heterodimer of an alpha and a beta chain. In terms of processing, the alpha and beta chains are autoproteolytically processed from a single precursor protein within the mitochondrion.

The protein resides in the mitochondrion matrix. It catalyses the reaction N(2)-acetyl-L-ornithine + L-glutamate = N-acetyl-L-glutamate + L-ornithine. It carries out the reaction L-glutamate + acetyl-CoA = N-acetyl-L-glutamate + CoA + H(+). It functions in the pathway amino-acid biosynthesis; L-arginine biosynthesis; L-ornithine and N-acetyl-L-glutamate from L-glutamate and N(2)-acetyl-L-ornithine (cyclic): step 1/1. The protein operates within amino-acid biosynthesis; L-arginine biosynthesis; N(2)-acetyl-L-ornithine from L-glutamate: step 1/4. Catalyzes two activities which are involved in the cyclic version of arginine biosynthesis: the synthesis of acetylglutamate from glutamate and acetyl-CoA, and of ornithine by transacetylation between acetylornithine and glutamate. The chain is Arginine biosynthesis bifunctional protein ArgJ, mitochondrial from Pyricularia oryzae (strain 70-15 / ATCC MYA-4617 / FGSC 8958) (Rice blast fungus).